The following is a 719-amino-acid chain: MQYSIEINKNTEIFNIDKVAKQAAGAVLMRQGKSVVLATVAREEKQVEEDFLPLTVQYIEKAYAAGKIPGGYVKRETKPSDAETLTARIIDRSLRPLFPKGYAYPTQIVVMVLSADPKVDLQVMSLNAASVALYLSDIPMKAPVCGVRIGKIDGNFILNPNNEELQNSTLDLYVAGVKDELLMIEMRALPDQKENEIFIEAPYADVLTQTTSQNMNELSEDEILEALNLAQKAILNGSNAYEEAFSKHKKNSQIELKNEIEYPEILAFIENNFQKQIKEAINQMAKSERASELNKIAKEISNLEIAKEWSEESVLNTLAKVKRKLIRGQILNEGKRADGRSLNEVRPISIETNILPNAHGSCLFTRGQTQALVVATLGGENDAQMIDLLTEKNPISERFMVNYNFPGFSVGEASPIKAPGRRELGHGNLAKRALYPSVDENYPYVIRLVSEILESNGSSSMATVCGGSLALKAAGVPSLKLVAGVAMGLIFEDNKYAVLTDIMGLEDHDGDMDFKVAGSKDGVTALQMDIKLGGIDQETLKQALYQAKEGRIHILNIMEEAAKEIIVNEEVLPKLELFSVDPSKIVDIIGQAGKTIKEIVEKFGVSIDLDREKGEVKIAGSQNEQIKAAKDYIINITSSQKGTKKGSKDKDISGFELGQEFQGIVKKIAPFGAFVELKNGVDGLLHSSKSKHLNLSENQSLKVKISEIKNGKISVDLCE.

Residues Asp-507 and Asp-513 each contribute to the Mg(2+) site. In terms of domain architecture, KH spans 573 to 633 (PKLELFSVDP…EQIKAAKDYI (61 aa)). Residues 658 to 719 (GQEFQGIVKK…NGKISVDLCE (62 aa)) form the S1 motif domain.

This sequence belongs to the polyribonucleotide nucleotidyltransferase family. Mg(2+) is required as a cofactor.

The protein localises to the cytoplasm. It carries out the reaction RNA(n+1) + phosphate = RNA(n) + a ribonucleoside 5'-diphosphate. Functionally, involved in mRNA degradation. Catalyzes the phosphorolysis of single-stranded polyribonucleotides processively in the 3'- to 5'-direction. This Campylobacter jejuni (strain RM1221) protein is Polyribonucleotide nucleotidyltransferase.